A 121-amino-acid polypeptide reads, in one-letter code: Large ribosomal subunit protein uL18 (121 aa).

Belongs to the universal ribosomal protein uL18 family. In terms of assembly, part of the 50S ribosomal subunit; part of the 5S rRNA/L5/L18/L25 subcomplex. Contacts the 5S and 23S rRNAs.

This is one of the proteins that bind and probably mediate the attachment of the 5S RNA into the large ribosomal subunit, where it forms part of the central protuberance. In Bordetella avium (strain 197N), this protein is Large ribosomal subunit protein uL18.